Reading from the N-terminus, the 364-residue chain is Probable cysteine protease RDL4 (364 aa).

The signal sequence occupies residues 1-23 (MGSAKSAMLILLVAMVIASCATA). Residues 24–136 (IDMSVVSYDD…DRYKTSADDV (113 aa)) constitute a propeptide, activation peptide. Asn-87 carries N-linked (GlcNAc...) asparagine glycosylation. Intrachain disulfides connect Cys-158–Cys-199, Cys-192–Cys-232, and Cys-291–Cys-342. Cys-161 is an active-site residue. Residues His-297 and Asn-317 contribute to the active site.

The protein belongs to the peptidase C1 family. In terms of tissue distribution, expressed in inflorescences.

In terms of biological role, probable thiol protease. The protein is Probable cysteine protease RDL4 of Arabidopsis thaliana (Mouse-ear cress).